Consider the following 196-residue polypeptide: Large ribosomal subunit protein uL6 (196 aa).

The protein belongs to the universal ribosomal protein uL6 family. As to quaternary structure, part of the 50S ribosomal subunit.

In terms of biological role, this protein binds to the 23S rRNA, and is important in its secondary structure. It is located near the subunit interface in the base of the L7/L12 stalk, and near the tRNA binding site of the peptidyltransferase center. This Archaeoglobus fulgidus (strain ATCC 49558 / DSM 4304 / JCM 9628 / NBRC 100126 / VC-16) protein is Large ribosomal subunit protein uL6.